A 304-amino-acid chain; its full sequence is Polyisoprenyl-teichoic acid--peptidoglycan teichoic acid transferase TagU (304 aa).

Residues 1–4 lie on the Cytoplasmic side of the membrane; it reads MKKK. A helical; Signal-anchor for type II membrane protein membrane pass occupies residues 5 to 25; sequence ILFWILGIIGILIIGGGAYAY. Topologically, residues 26–304 are extracellular; the sequence is SIYSSVSKTL…KLRAHLEVTK (279 aa).

The protein belongs to the LytR/CpsA/Psr (LCP) family.

The protein localises to the cell membrane. The protein operates within cell wall biogenesis. In terms of biological role, may catalyze the final step in cell wall teichoic acid biosynthesis, the transfer of the anionic cell wall polymers (APs) from their lipid-linked precursor to the cell wall peptidoglycan (PG). In Bacillus cereus (strain ATCC 14579 / DSM 31 / CCUG 7414 / JCM 2152 / NBRC 15305 / NCIMB 9373 / NCTC 2599 / NRRL B-3711), this protein is Polyisoprenyl-teichoic acid--peptidoglycan teichoic acid transferase TagU.